Reading from the N-terminus, the 346-residue chain is Tetraacyldisaccharide 4'-kinase (346 aa).

Threonine 54–threonine 61 provides a ligand contact to ATP.

The protein belongs to the LpxK family.

It catalyses the reaction a lipid A disaccharide + ATP = a lipid IVA + ADP + H(+). Its pathway is glycolipid biosynthesis; lipid IV(A) biosynthesis; lipid IV(A) from (3R)-3-hydroxytetradecanoyl-[acyl-carrier-protein] and UDP-N-acetyl-alpha-D-glucosamine: step 6/6. Transfers the gamma-phosphate of ATP to the 4'-position of a tetraacyldisaccharide 1-phosphate intermediate (termed DS-1-P) to form tetraacyldisaccharide 1,4'-bis-phosphate (lipid IVA). This chain is Tetraacyldisaccharide 4'-kinase, found in Rhizobium meliloti (strain 1021) (Ensifer meliloti).